The sequence spans 351 residues: DNA polymerase IV (351 aa).

One can recognise a UmuC domain in the interval 4-185 (IIHVDMDCFF…LPLEKIPGVG (182 aa)). The Mg(2+) site is built by Asp8 and Asp103. The active site involves Glu104.

This sequence belongs to the DNA polymerase type-Y family. Monomer. Mg(2+) serves as cofactor.

It localises to the cytoplasm. The catalysed reaction is DNA(n) + a 2'-deoxyribonucleoside 5'-triphosphate = DNA(n+1) + diphosphate. Its function is as follows. Poorly processive, error-prone DNA polymerase involved in untargeted mutagenesis. Copies undamaged DNA at stalled replication forks, which arise in vivo from mismatched or misaligned primer ends. These misaligned primers can be extended by PolIV. Exhibits no 3'-5' exonuclease (proofreading) activity. May be involved in translesional synthesis, in conjunction with the beta clamp from PolIII. This is DNA polymerase IV from Shigella flexneri.